A 569-amino-acid chain; its full sequence is Glutamate--tRNA ligase (569 aa).

The 'HIGH' region motif lies at 107 to 117; that stretch reads PEPNGYPHIGH.

This sequence belongs to the class-I aminoacyl-tRNA synthetase family. Glutamate--tRNA ligase type 2 subfamily.

It localises to the cytoplasm. It carries out the reaction tRNA(Glu) + L-glutamate + ATP = L-glutamyl-tRNA(Glu) + AMP + diphosphate. Functionally, catalyzes the attachment of glutamate to tRNA(Glu) in a two-step reaction: glutamate is first activated by ATP to form Glu-AMP and then transferred to the acceptor end of tRNA(Glu). The sequence is that of Glutamate--tRNA ligase from Nitrosopumilus maritimus (strain SCM1).